Reading from the N-terminus, the 396-residue chain is Na(+)/H(+) antiporter NhaA (396 aa).

The next 11 membrane-spanning stretches (helical) occupy residues 16–36 (GIILIMAAMLAMILANSGLAG), 59–79 (LLLWINDGFMAVFFLLVGLEV), 95–115 (TFPAIAAVGGMLAPALIYAFF), 124–144 (AGWAIPAATDIAFALGVMALL), 154–174 (VFLLALAIMDDLGVIIIIALF), 178–198 (QLSLTALAIGILATLTLLWMN), 213–233 (LVLWVAVLKSGVHATLAGVIV), 254–274 (ALHPWSAYLILPLFAFANAGV), 278–298 (GIGLSALLSPVPLGIMLGLFI), 328–348 (IFAVSILCGIGFTMSMFIASL), and 363–383 (LGILVGSTLAAIVGYLALRIA).

The protein belongs to the NhaA Na(+)/H(+) (TC 2.A.33) antiporter family.

Its subcellular location is the cell inner membrane. The catalysed reaction is Na(+)(in) + 2 H(+)(out) = Na(+)(out) + 2 H(+)(in). Na(+)/H(+) antiporter that extrudes sodium in exchange for external protons. The polypeptide is Na(+)/H(+) antiporter NhaA (Aeromonas hydrophila subsp. hydrophila (strain ATCC 7966 / DSM 30187 / BCRC 13018 / CCUG 14551 / JCM 1027 / KCTC 2358 / NCIMB 9240 / NCTC 8049)).